We begin with the raw amino-acid sequence, 112 residues long: Large ribosomal subunit protein uL22 (112 aa).

It belongs to the universal ribosomal protein uL22 family. In terms of assembly, part of the 50S ribosomal subunit.

In terms of biological role, this protein binds specifically to 23S rRNA; its binding is stimulated by other ribosomal proteins, e.g. L4, L17, and L20. It is important during the early stages of 50S assembly. It makes multiple contacts with different domains of the 23S rRNA in the assembled 50S subunit and ribosome. Functionally, the globular domain of the protein is located near the polypeptide exit tunnel on the outside of the subunit, while an extended beta-hairpin is found that lines the wall of the exit tunnel in the center of the 70S ribosome. This Mesoplasma florum (strain ATCC 33453 / NBRC 100688 / NCTC 11704 / L1) (Acholeplasma florum) protein is Large ribosomal subunit protein uL22.